We begin with the raw amino-acid sequence, 1193 residues long: Pyruvate carboxylase (1193 aa).

In terms of domain architecture, Biotin carboxylation spans Gln-41 to Glu-493. The ATP site is built by Lys-159, Glu-243, and His-278. Positions Arg-163–Ala-360 constitute an ATP-grasp domain. Residue Arg-335 is part of the active site. A Pyruvate carboxyltransferase domain is found at Cys-579–Arg-847. Residues Arg-587–Gln-591 and Arg-660 each bind substrate. Asp-588 provides a ligand contact to a divalent metal cation. A divalent metal cation is bound by residues Lys-756, His-786, and His-788. An N6-carboxylysine modification is found at Lys-756. A substrate-binding site is contributed by Thr-921. Positions Lys-1116–Thr-1191 constitute a Biotinyl-binding domain. Lys-1157 carries the N6-biotinyllysine modification.

Biotin serves as cofactor. Requires Zn(2+) as cofactor.

It localises to the cytoplasm. The enzyme catalyses hydrogencarbonate + pyruvate + ATP = oxaloacetate + ADP + phosphate + H(+). It functions in the pathway carbohydrate biosynthesis; gluconeogenesis. Functionally, pyruvate carboxylase catalyzes a 2-step reaction, involving the ATP-dependent carboxylation of the covalently attached biotin in the first step and the transfer of the carboxyl group to pyruvate in the second. This is Pyruvate carboxylase (pyc) from Aspergillus terreus.